The sequence spans 216 residues: uncharacterized protein (216 aa).

4Fe-4S ferredoxin-type domains follow at residues 160-189 and 188-216; these read DDKP…IDEK and EKPK…ALLP. 8 residues coordinate [4Fe-4S] cluster: C169, C172, C175, C179, C197, C200, C203, and C207.

This sequence belongs to the FrhG family.

This is an uncharacterized protein from Methanocaldococcus jannaschii (strain ATCC 43067 / DSM 2661 / JAL-1 / JCM 10045 / NBRC 100440) (Methanococcus jannaschii).